Reading from the N-terminus, the 316-residue chain is tRNA dimethylallyltransferase (316 aa).

Residue 17 to 24 participates in ATP binding; it reads GPTASGKT. A substrate-binding site is contributed by 19 to 24; sequence TASGKT. Interaction with substrate tRNA stretches follow at residues 42 to 45, 166 to 170, and 247 to 252; these read DSAL, QRLSR, and RCVGYR.

It belongs to the IPP transferase family. As to quaternary structure, monomer. Mg(2+) is required as a cofactor.

The enzyme catalyses adenosine(37) in tRNA + dimethylallyl diphosphate = N(6)-dimethylallyladenosine(37) in tRNA + diphosphate. Its function is as follows. Catalyzes the transfer of a dimethylallyl group onto the adenine at position 37 in tRNAs that read codons beginning with uridine, leading to the formation of N6-(dimethylallyl)adenosine (i(6)A). The protein is tRNA dimethylallyltransferase of Salmonella newport (strain SL254).